We begin with the raw amino-acid sequence, 571 residues long: Proline--tRNA ligase (571 aa).

This sequence belongs to the class-II aminoacyl-tRNA synthetase family. ProS type 1 subfamily. In terms of assembly, homodimer.

The protein localises to the cytoplasm. The enzyme catalyses tRNA(Pro) + L-proline + ATP = L-prolyl-tRNA(Pro) + AMP + diphosphate. Functionally, catalyzes the attachment of proline to tRNA(Pro) in a two-step reaction: proline is first activated by ATP to form Pro-AMP and then transferred to the acceptor end of tRNA(Pro). As ProRS can inadvertently accommodate and process non-cognate amino acids such as alanine and cysteine, to avoid such errors it has two additional distinct editing activities against alanine. One activity is designated as 'pretransfer' editing and involves the tRNA(Pro)-independent hydrolysis of activated Ala-AMP. The other activity is designated 'posttransfer' editing and involves deacylation of mischarged Ala-tRNA(Pro). The misacylated Cys-tRNA(Pro) is not edited by ProRS. The sequence is that of Proline--tRNA ligase from Syntrophotalea carbinolica (strain DSM 2380 / NBRC 103641 / GraBd1) (Pelobacter carbinolicus).